The primary structure comprises 196 residues: tRNA(Phe) 7-((3-amino-3-carboxypropyl)-4-demethylwyosine(37)-N(4))-methyltransferase 1 (196 aa).

The protein belongs to the TYW3 family.

It catalyses the reaction 4-demethyl-7-[(3S)-3-amino-3-carboxypropyl]wyosine(37) in tRNA(Phe) + S-adenosyl-L-methionine = 7-[(3S)-3-amino-3-carboxypropyl]wyosine(37) in tRNA(Phe) + S-adenosyl-L-homocysteine + H(+). Its function is as follows. S-adenosyl-L-methionine-dependent methyltransferase that acts as a component of the wyosine derivatives biosynthesis pathway. Probably methylates N-4 position of wybutosine-86 to produce wybutosine-72. The chain is tRNA(Phe) 7-((3-amino-3-carboxypropyl)-4-demethylwyosine(37)-N(4))-methyltransferase 1 from Pyrococcus furiosus (strain ATCC 43587 / DSM 3638 / JCM 8422 / Vc1).